A 527-amino-acid polypeptide reads, in one-letter code: uncharacterized protein (527 aa).

This is an uncharacterized protein from Schizosaccharomyces pombe (strain 972 / ATCC 24843) (Fission yeast).